The primary structure comprises 394 residues: Ceramide glucosyltransferase-B (394 aa).

Residues M1–G10 lie on the Lumenal side of the membrane. A helical transmembrane segment spans residues L11–Y32. At T33–R195 the chain is on the cytoplasmic side. D92 is a short sequence motif (D1). A short sequence motif (D2) is located at residue D144. The chain crosses the membrane as a helical span at residues S196–M215. At R216–T287 the chain is on the lumenal side. Residue D236 is a short sequence motif, D3. The active-site Proton acceptor is the D236. The (Q/R)XXRW motif lies at R272–W276. The helical transmembrane segment at I288–G304 threads the bilayer. The Cytoplasmic segment spans residues W305–H309. The helical transmembrane segment at I310–I328 threads the bilayer. Residues F329–D348 are Lumenal-facing. The chain crosses the membrane as a helical span at residues Y349–W369. Residues D370 to V394 are Cytoplasmic-facing.

The protein belongs to the glycosyltransferase 2 family.

The protein resides in the golgi apparatus membrane. It carries out the reaction an N-acylsphing-4-enine + UDP-alpha-D-glucose = a beta-D-glucosyl-(1&lt;-&gt;1')-N-acylsphing-4-enine + UDP + H(+). The enzyme catalyses UDP-alpha-D-xylose + an N-acylsphing-4-enine = a beta-D-xylosyl-(1&lt;-&gt;1')-N-acylsphing-4-enine + UDP + H(+). The catalysed reaction is N-(9Z-octadecenoyl)-sphing-4-enine + UDP-alpha-D-xylose = beta-D-xylosyl-(1&lt;-&gt;1')-N-(9Z-octadecenoyl)-sphing-4-enine + UDP + H(+). It functions in the pathway lipid metabolism; sphingolipid metabolism. In terms of biological role, participates in the initial step of the glucosylceramide-based glycosphingolipid/GSL synthetic pathway at the cytosolic surface of the Golgi. Catalyzes the transfer of glucose from UDP-glucose to ceramide to produce glucosylceramide/GlcCer (such as beta-D-glucosyl-(1&lt;-&gt;1')-N-acylsphing-4-enine). Glucosylceramide is the core component of glycosphingolipids/GSLs, amphipathic molecules consisting of a ceramide lipid moiety embedded in the outer leaflet of the membrane, linked to one of hundreds of different externally oriented oligosaccharide structures. Glycosphingolipids are essential components of membrane microdomains that mediate membrane trafficking and signal transduction. They are implicated in many fundamental cellular processes, including growth, differentiation, migration, morphogenesis, cell-to-cell and cell-to-matrix interactions. Catalyzes the synthesis of xylosylceramide/XylCer (such as beta-D-xylosyl-(1&lt;-&gt;1')-N-acylsphing-4-enine) using UDP-Xyl as xylose donor. In Xenopus laevis (African clawed frog), this protein is Ceramide glucosyltransferase-B (ugcg-b).